A 510-amino-acid polypeptide reads, in one-letter code: Alpha-L-arabinofuranosidase B (510 aa).

The signal sequence occupies residues 1–24; sequence MTMSRSSRSSVLALALATGSLVAA. Residues 25–342 form a catalytic region; it reads GPCDIYSSGG…ADIVAAKYAT (318 aa). Cystine bridges form between cysteine 27–cysteine 37, cysteine 87–cysteine 92, and cysteine 182–cysteine 183. Residue asparagine 89 is glycosylated (N-linked (GlcNAc...) asparagine). Aspartate 225 serves as a coordination point for substrate. The Nucleophile role is filled by glutamate 227. Substrate contacts are provided by asparagine 228 and glycine 303. Residue aspartate 304 is the Proton donor of the active site. The interval 343–510 is ABD; it reads TSLISGPALT…VSWVVADGFA (168 aa). A disulfide bridge links cysteine 412 with cysteine 450. Positions 427, 429, 430, 446, 475, 477, 480, and 500 each coordinate substrate.

Belongs to the glycosyl hydrolase 54 family.

It localises to the secreted. It catalyses the reaction Hydrolysis of terminal non-reducing alpha-L-arabinofuranoside residues in alpha-L-arabinosides.. It functions in the pathway glycan metabolism; L-arabinan degradation. Functionally, alpha-L-arabinofuranosidase involved in the degradation of arabinoxylan, a major component of plant hemicellulose. Able to hydrolyze 1,5-, 1,3- and 1,2-alpha-linkages not only in L-arabinofuranosyl oligosaccharides, but also in polysaccharides containing terminal non-reducing L-arabinofuranoses in side chains, like L-arabinan, arabinogalactan and arabinoxylan. The sequence is that of Alpha-L-arabinofuranosidase B (abfB) from Emericella nidulans (strain FGSC A4 / ATCC 38163 / CBS 112.46 / NRRL 194 / M139) (Aspergillus nidulans).